The primary structure comprises 412 residues: Serine hydroxymethyltransferase (412 aa).

Residues L117 and G121–L123 contribute to the (6S)-5,6,7,8-tetrahydrofolate site. Residue K226 is modified to N6-(pyridoxal phosphate)lysine. (6S)-5,6,7,8-tetrahydrofolate is bound at residue S349–F351.

The protein belongs to the SHMT family. In terms of assembly, homodimer. The cofactor is pyridoxal 5'-phosphate.

Its subcellular location is the cytoplasm. It catalyses the reaction (6R)-5,10-methylene-5,6,7,8-tetrahydrofolate + glycine + H2O = (6S)-5,6,7,8-tetrahydrofolate + L-serine. It functions in the pathway one-carbon metabolism; tetrahydrofolate interconversion. Its pathway is amino-acid biosynthesis; glycine biosynthesis; glycine from L-serine: step 1/1. Its function is as follows. Catalyzes the reversible interconversion of serine and glycine with tetrahydrofolate (THF) serving as the one-carbon carrier. This reaction serves as the major source of one-carbon groups required for the biosynthesis of purines, thymidylate, methionine, and other important biomolecules. Also exhibits THF-independent aldolase activity toward beta-hydroxyamino acids, producing glycine and aldehydes, via a retro-aldol mechanism. The protein is Serine hydroxymethyltransferase of Nitratidesulfovibrio vulgaris (strain DSM 19637 / Miyazaki F) (Desulfovibrio vulgaris).